A 111-amino-acid chain; its full sequence is Small ribosomal subunit protein bS16 (111 aa).

The tract at residues 92–111 (MDVKAKNRKARSSKQEAKEA) is disordered.

The protein belongs to the bacterial ribosomal protein bS16 family.

This Rickettsia akari (strain Hartford) protein is Small ribosomal subunit protein bS16.